The sequence spans 121 residues: Cytochrome B5-like protein (121 aa).

Residues 1–21 (MIAVIGLLLGFLVSALFLIQG) form a helical membrane-spanning segment. The segment at 24 to 49 (RRTNDNQEKKRSSSEPVEDVVRPKSY) is disordered. Residues 26–36 (TNDNQEKKRSS) are compositionally biased toward basic and acidic residues. A Cytochrome b5 heme-binding domain is found at 46–121 (PKSYSKSEVA…IEDFYIGELH (76 aa)). The heme site is built by H81 and H104.

It belongs to the cytochrome b5 family.

Its subcellular location is the membrane. The sequence is that of Cytochrome B5-like protein from Arabidopsis thaliana (Mouse-ear cress).